Here is a 156-residue protein sequence, read N- to C-terminus: Small ribosomal subunit protein uS7 (156 aa).

The protein belongs to the universal ribosomal protein uS7 family. As to quaternary structure, part of the 30S ribosomal subunit. Contacts proteins S9 and S11.

Its function is as follows. One of the primary rRNA binding proteins, it binds directly to 16S rRNA where it nucleates assembly of the head domain of the 30S subunit. Is located at the subunit interface close to the decoding center, probably blocks exit of the E-site tRNA. The protein is Small ribosomal subunit protein uS7 of Shewanella woodyi (strain ATCC 51908 / MS32).